The chain runs to 366 residues: Protein FAM131A (366 aa).

The interval 342 to 366 (QRQASDLASSGVVSLDEDEAEPEEQ) is disordered. Positions 356–366 (LDEDEAEPEEQ) are enriched in acidic residues.

Belongs to the FAM131 family.

The polypeptide is Protein FAM131A (FAM131A) (Homo sapiens (Human)).